Here is a 162-residue protein sequence, read N- to C-terminus: Allophycocyanin beta chain (162 aa).

Position 72 is an N4-methylasparagine (N72). C82 serves as a coordination point for (2R,3E)-phycocyanobilin.

It belongs to the phycobiliprotein family. Heterodimer of an alpha and a beta chain. In terms of processing, contains one covalently linked phycocyanobilin chromophore.

It is found in the cellular thylakoid membrane. In terms of biological role, light-harvesting photosynthetic bile pigment-protein from the phycobiliprotein complex. Allophycocyanin has a maximum absorption at approximately 650 nanometers. The protein is Allophycocyanin beta chain of Microchaete diplosiphon (Fremyella diplosiphon).